Here is an 865-residue protein sequence, read N- to C-terminus: Protein translocase subunit SecA (865 aa).

ATP contacts are provided by residues glutamine 85, 103 to 107 (GEGKT), and aspartate 505. Positions 847, 849, 858, and 859 each coordinate Zn(2+).

Belongs to the SecA family. As to quaternary structure, monomer and homodimer. Part of the essential Sec protein translocation apparatus which comprises SecA, SecYEG and auxiliary proteins SecDF. Other proteins may also be involved. It depends on Zn(2+) as a cofactor.

Its subcellular location is the cell membrane. The protein resides in the cytoplasm. The catalysed reaction is ATP + H2O + cellular proteinSide 1 = ADP + phosphate + cellular proteinSide 2.. Its function is as follows. Part of the Sec protein translocase complex. Interacts with the SecYEG preprotein conducting channel. Has a central role in coupling the hydrolysis of ATP to the transfer of proteins into and across the cell membrane, serving as an ATP-driven molecular motor driving the stepwise translocation of polypeptide chains across the membrane. This chain is Protein translocase subunit SecA, found in Lactococcus lactis subsp. lactis (strain IL1403) (Streptococcus lactis).